We begin with the raw amino-acid sequence, 74 residues long: uncharacterized protein (74 aa).

This is an uncharacterized protein from Treponema pallidum (strain Nichols).